A 224-amino-acid polypeptide reads, in one-letter code: Ribose-5-phosphate isomerase A (224 aa).

Substrate is bound by residues T26–T29, D81–D84, and K94–G97. E103 (proton acceptor) is an active-site residue. K121 contributes to the substrate binding site.

This sequence belongs to the ribose 5-phosphate isomerase family. As to quaternary structure, homodimer.

It carries out the reaction aldehydo-D-ribose 5-phosphate = D-ribulose 5-phosphate. The protein operates within carbohydrate degradation; pentose phosphate pathway; D-ribose 5-phosphate from D-ribulose 5-phosphate (non-oxidative stage): step 1/1. Functionally, catalyzes the reversible conversion of ribose-5-phosphate to ribulose 5-phosphate. The sequence is that of Ribose-5-phosphate isomerase A from Listeria innocua serovar 6a (strain ATCC BAA-680 / CLIP 11262).